Consider the following 413-residue polypeptide: Aminopeptidase PepS (413 aa).

Residues glutamate 253, glutamate 319, glutamate 343, histidine 348, histidine 381, and aspartate 383 each contribute to the a divalent metal cation site.

It belongs to the peptidase M29 family. As to quaternary structure, monomer. Co(2+) serves as cofactor. The cofactor is Zn(2+). Mg(2+) is required as a cofactor.

Functionally, exhibits a high specificity towards peptides possessing arginine or aromatic amino acids at the N-terminus. Could be involved both in bacterial growth by supplying amino acids. The protein is Aminopeptidase PepS (pepS) of Streptococcus thermophilus.